Reading from the N-terminus, the 106-residue chain is UPF0145 protein PputGB1_2909 (106 aa).

The protein belongs to the UPF0145 family.

This Pseudomonas putida (strain GB-1) protein is UPF0145 protein PputGB1_2909.